The sequence spans 513 residues: NADH-quinone oxidoreductase chain 13 (513 aa).

14 consecutive transmembrane segments (helical) span residues 3 to 23 (NLLS…ALFL), 34 to 54 (AKWL…FVLF), 81 to 101 (VDGI…LTIL), 112 to 132 (EYMI…TALD), 133 to 153 (LVLF…IIGI), 164 to 184 (FKFF…MIAM), 211 to 231 (MTVV…SFAV), 250 to 270 (PTAG…YGFL), 277 to 297 (FPVA…IAIV), 312 to 332 (VIAY…FAAN), 340 to 360 (IFQM…VGVI), 383 to 403 (AAVF…SGFV), 418 to 438 (WVAL…LWLY), and 463 to 483 (WVFI…RLVT).

The protein belongs to the complex I subunit 4 family. As to quaternary structure, NDH-1 is composed of at least 14 different subunits, Nqo1 to Nqo14. The complex has a L-shaped structure, with the hydrophobic arm (subunits Nqo7, Nqo8, Nqo10 to Nqo14) embedded in the inner membrane and the hydrophilic peripheral arm (subunits Nqo1 to Nqo6, Nqo9) protruding into the bacterial cytoplasm. The hydrophilic domain contains all the redox centers.

The protein resides in the cell inner membrane. It catalyses the reaction a quinone + NADH + 5 H(+)(in) = a quinol + NAD(+) + 4 H(+)(out). Functionally, NDH-1 shuttles electrons from NADH, via FMN and iron-sulfur (Fe-S) centers, to quinones in the respiratory chain. The immediate electron acceptor for the enzyme in this species is believed to be ubiquinone. Couples the redox reaction to proton translocation (for every two electrons transferred, four hydrogen ions are translocated across the cytoplasmic membrane), and thus conserves the redox energy in a proton gradient. This chain is NADH-quinone oxidoreductase chain 13, found in Paracoccus denitrificans.